Consider the following 243-residue polypeptide: Epoxyqueuosine reductase QueH (243 aa).

Positions 1–16 (MHRTKLEQKQPHFDAQ) are enriched in basic and acidic residues. The disordered stretch occupies residues 1 to 30 (MHRTKLEQKQPHFDAQKRRKKECKNSNTPF). C49, C50, C128, and C131 together coordinate [4Fe-4S] cluster. A disulfide bridge connects residues C211 and C213.

This sequence belongs to the QueH family.

The catalysed reaction is epoxyqueuosine(34) in tRNA + AH2 = queuosine(34) in tRNA + A + H2O. It functions in the pathway tRNA modification; tRNA-queuosine biosynthesis. Its function is as follows. Catalyzes the conversion of epoxyqueuosine (oQ) to queuosine (Q), which is a hypermodified base found in the wobble positions of tRNA(Asp), tRNA(Asn), tRNA(His) and tRNA(Tyr). In Histophilus somni (strain 129Pt) (Haemophilus somnus), this protein is Epoxyqueuosine reductase QueH.